The following is a 532-amino-acid chain: Variant surface glycoprotein ILTAT 1.23 (532 aa).

A signal peptide spans 1–23; it reads MFKNINAAVLLLILSTRNDYANA. Asn66 is a glycosylation site (N-linked (GlcNAc...) asparagine). Disordered stretches follow at residues 79–107 and 408–504; these read APKK…RNHA and MQAG…DQDK. Asn419 is a glycosylation site (N-linked (GlcNAc...) asparagine). Residues 427–445 are compositionally biased toward basic and acidic residues; that stretch reads CKWEEKDGKDGKCVADDSK. The span at 450–470 shows a compositional bias: low complexity; the sequence is GNAPAGAGDGTAGTTTTPNCA. Composition is skewed to basic and acidic residues over residues 472-484 and 494-504; these read HTDK…ENKG and KGKEGESDQDK. An N-linked (GlcNAc...) asparagine glycan is attached at Asn509. Residue Asn509 is the site of GPI-anchor amidated asparagine attachment. A propeptide spans 510–532 (removed in mature form); that stretch reads GSFLAKKKFALSVVSAAFTALLF.

It is found in the cell membrane. Functionally, VSG forms a coat on the surface of the parasite. The trypanosome evades the immune response of the host by expressing a series of antigenically distinct VSGs from an estimated 1000 VSG genes. The chain is Variant surface glycoprotein ILTAT 1.23 from Trypanosoma brucei brucei.